The sequence spans 577 residues: Protein O-linked-mannose beta-1,4-N-acetylglucosaminyltransferase 2 (577 aa).

The Cytoplasmic portion of the chain corresponds to 1 to 4 (MNIA). Residues 5–25 (AVFNALLVSVLATVLWKYIKL) form a helical; Signal-anchor for type II membrane protein membrane-spanning segment. The Lumenal portion of the chain corresponds to 26 to 577 (REHAFMVEEE…PFADVLLCST (552 aa)). 4 N-linked (GlcNAc...) asparagine glycosylation sites follow: Asn-98, Asn-275, Asn-335, and Asn-540. Residues 481-577 (KVRDARCQAS…PFADVLLCST (97 aa)) enclose the Fibronectin type-III domain.

It belongs to the glycosyltransferase 61 family.

It localises to the endoplasmic reticulum membrane. It catalyses the reaction 3-O-(alpha-D-mannosyl)-L-threonyl-[protein] + UDP-N-acetyl-alpha-D-glucosamine = 3-O-(N-acetyl-beta-D-glucosaminyl-(1-&gt;4)-alpha-D-mannosyl)-L-threonyl-[protein] + UDP + H(+). It participates in protein modification; protein glycosylation. In terms of biological role, O-linked mannose beta-1,4-N-acetylglucosaminyltransferase that transfers UDP-N-acetyl-D-glucosamine to the 4-position of the mannose to generate N-acetyl-D-glucosamine-beta-1,4-O-D-mannosylprotein. Involved in the biosynthesis of the phosphorylated O-mannosyl trisaccharide (N-acetylgalactosamine-beta-3-N-acetylglucosamine-beta-4-(phosphate-6-)mannose), a carbohydrate structure present in alpha-dystroglycan (DAG1), which is required for binding laminin G-like domain-containing extracellular proteins with high affinity. The protein is Protein O-linked-mannose beta-1,4-N-acetylglucosaminyltransferase 2 (POMGNT2) of Gallus gallus (Chicken).